The primary structure comprises 423 residues: L-cysteine:1D-myo-inositol 2-amino-2-deoxy-alpha-D-glucopyranoside ligase (423 aa).

C45 contributes to the Zn(2+) binding site. Residues 45–48, T60, and 83–85 each bind L-cysteinyl-5'-AMP; these read CGIT and NVT. Residues 47-57 carry the 'HIGH' region motif; the sequence is ITPYDATHIGH. The 'ERGGDP' region signature appears at 197–202; that stretch reads DRGGDP. W238 contacts L-cysteinyl-5'-AMP. C242 serves as a coordination point for Zn(2+). 260–262 is an L-cysteinyl-5'-AMP binding site; the sequence is GSD. H267 provides a ligand contact to Zn(2+). Position 294 (I294) interacts with L-cysteinyl-5'-AMP. The 'KMSKS' region motif lies at 300–304; sequence KMSKS.

The protein belongs to the class-I aminoacyl-tRNA synthetase family. MshC subfamily. In terms of assembly, monomer. Zn(2+) is required as a cofactor.

The catalysed reaction is 1D-myo-inositol 2-amino-2-deoxy-alpha-D-glucopyranoside + L-cysteine + ATP = 1D-myo-inositol 2-(L-cysteinylamino)-2-deoxy-alpha-D-glucopyranoside + AMP + diphosphate + H(+). Functionally, catalyzes the ATP-dependent condensation of GlcN-Ins and L-cysteine to form L-Cys-GlcN-Ins. This chain is L-cysteine:1D-myo-inositol 2-amino-2-deoxy-alpha-D-glucopyranoside ligase, found in Jonesia denitrificans (strain ATCC 14870 / DSM 20603 / BCRC 15368 / CIP 55.134 / JCM 11481 / NBRC 15587 / NCTC 10816 / Prevot 55134) (Listeria denitrificans).